A 323-amino-acid chain; its full sequence is Calcium homeostasis modulator protein 2 (323 aa).

Residues 1–21 lie on the Cytoplasmic side of the membrane; it reads MAALIAENFRFLSLFFKSKDV. A central pore region spans residues 14–39; the sequence is LFFKSKDVMIFNGLVALGTVGSQELF. The helical transmembrane segment at 22-43 threads the bilayer; sequence MIFNGLVALGTVGSQELFTVVA. Over 44–52 the chain is Extracellular; the sequence is FHCPCSPAR. 2 disulfides stabilise this stretch: C46-C130 and C48-C162. Residues 53–76 traverse the membrane as a helical segment; that stretch reads NYLYGLAAIGVPALALFLIGVILN. Topologically, residues 77 to 101 are cytoplasmic; sequence NHTWNLVAECQYRRTKNCSAAPNFL. A helical membrane pass occupies residues 102–132; the sequence is LLSSIVGRAAVAPVTWSVISLLRGEAYVCAL. Over 133–179 the chain is Extracellular; the sequence is SEFVNPHSLMVGERSFPVAHATEILARFPCGEGPANLSVFREEVSRR. The tract at residues 145–152 is hemichannel docking; the sequence is ERSFPVAH. A helical transmembrane segment spans residues 180 to 206; it reads LKYESQLFGWLLIGVVAILVFLTKCLK. Over 207 to 323 the chain is Cytoplasmic; that stretch reads HYCSPLSYRQ…DHVEMSLLPS (117 aa). An intersubunit interaction region spans residues 214 to 251; the sequence is YRQEAYWAQYRANEDQLFQRTAEVHSRVLAANNVRRFF.

Belongs to the CALHM family. As to quaternary structure, homo-undecamer. Two undecameric hemichannels can assemble in a head-to-head manner to form a gap junction.

The protein localises to the cell membrane. The catalysed reaction is ATP(in) = ATP(out). Its function is as follows. Pore-forming subunit of Ca(2+) homeostasis modulator channels. Mediates ATP release from astrocytes and ATP-induced Ca(2+) influx in microglia thus regulating neuronal ATP and Ca(2+) homeostasis, synaptic transmission and neuroinflammatory response. May form intercellular gap junctions. The gating mechanism remains unknown. The sequence is that of Calcium homeostasis modulator protein 2 (CALHM2) from Bos taurus (Bovine).